Reading from the N-terminus, the 448-residue chain is Signal recognition particle 54 kDa protein (448 aa).

Residues 107–114, 189–193, and 247–250 contribute to the GTP site; these read GIQGSGKT, DTAGR, and TKLD.

This sequence belongs to the GTP-binding SRP family. SRP54 subfamily. In terms of assembly, part of the signal recognition particle protein translocation system, which is composed of SRP and FtsY. Archaeal SRP consists of a 7S RNA molecule of 300 nucleotides and two protein subunits: SRP54 and SRP19.

It localises to the cytoplasm. It catalyses the reaction GTP + H2O = GDP + phosphate + H(+). Its function is as follows. Involved in targeting and insertion of nascent membrane proteins into the cytoplasmic membrane. Binds to the hydrophobic signal sequence of the ribosome-nascent chain (RNC) as it emerges from the ribosomes. The SRP-RNC complex is then targeted to the cytoplasmic membrane where it interacts with the SRP receptor FtsY. The chain is Signal recognition particle 54 kDa protein from Thermococcus gammatolerans (strain DSM 15229 / JCM 11827 / EJ3).